Reading from the N-terminus, the 336-residue chain is Foldase protein PrsA (336 aa).

Positions 1 to 22 are cleaved as a signal peptide; sequence MKSAKKLLSVLCLGIFILTFTA. The N-palmitoyl cysteine moiety is linked to residue cysteine 23. Residue cysteine 23 is the site of S-diacylglycerol cysteine attachment. In terms of domain architecture, PpiC spans 194 to 286; it reads PNTMNVSHIL…WGYHIIKINS (93 aa).

The protein belongs to the PrsA family.

It is found in the cell membrane. The enzyme catalyses [protein]-peptidylproline (omega=180) = [protein]-peptidylproline (omega=0). Its function is as follows. Plays a major role in protein secretion by helping the post-translocational extracellular folding of several secreted proteins. The polypeptide is Foldase protein PrsA (Clostridium botulinum (strain Langeland / NCTC 10281 / Type F)).